The chain runs to 249 residues: MEALMIRGVLEVHTDFTRQNVMIMEPQVLDFTVRGDKLWLHTEHGLLVSMAEYRSELLCTSAFLGYSAVFLLETEDAVTQVRLSDLRLKHRCGIVKADNLLHFALCTVISCVENCNLTRKCLHDLLQYLDAVNVRESFGRLLHHSARRLICSALYLLFEEKEPHIVQYVPATFVLFQQTRHTCLQLVARFFFRLTGQDEAHSFSLKLTERKTVDGWPVGLGLLDVLNANYPNLPSPPKLPPRWERGEEE.

This sequence belongs to the herpesviridae cytoplasmic envelopment protein 1 family.

It localises to the virion. The protein localises to the virion tegument. The protein resides in the host cytoplasm. It is found in the host Golgi apparatus. Functionally, plays a critical role in cytoplasmic virus egress. Participates in the final step of tegumentation and envelope acquisition within the host cytoplasm. This is Cytoplasmic envelopment protein 1 (UL103) from Homo sapiens (Human).